We begin with the raw amino-acid sequence, 481 residues long: ATP synthase subunit beta, chloroplastic (481 aa).

Residue 162-169 (GGAGVGKT) participates in ATP binding.

The protein belongs to the ATPase alpha/beta chains family. F-type ATPases have 2 components, F(1) - the catalytic core - and F(0) - the membrane proton channel. F(1) has five subunits: alpha(3), beta(3), gamma(1), delta(1), epsilon(1). F(0) has four main subunits: a(1), b(1), b'(1) and c(10-14). The alpha and beta chains form an alternating ring which encloses part of the gamma chain. F(1) is attached to F(0) by a central stalk formed by the gamma and epsilon chains, while a peripheral stalk is formed by the delta, b and b' chains.

Its subcellular location is the plastid. It is found in the chloroplast thylakoid membrane. The enzyme catalyses ATP + H2O + 4 H(+)(in) = ADP + phosphate + 5 H(+)(out). F(1)F(0) ATP synthase produces ATP from ADP in the presence of a proton or sodium gradient. F-type ATPases consist of two structural domains, F(1) containing the extramembraneous catalytic core and F(0) containing the membrane proton channel, linked together by a central stalk and a peripheral stalk. During catalysis, ATP synthesis in the catalytic domain of F(1) is coupled via a rotary mechanism of the central stalk subunits to proton translocation. Functionally, produces ATP from ADP in the presence of a proton gradient across the membrane. The catalytic sites are hosted primarily by the beta subunits. The sequence is that of ATP synthase subunit beta, chloroplastic from Chlamydomonas reinhardtii (Chlamydomonas smithii).